Here is a 173-residue protein sequence, read N- to C-terminus: Putative metal-dependent hydrolase BA_2700/GBAA_2700/BAS2515 (173 aa).

Positions 65, 156, and 160 each coordinate Zn(2+).

This sequence belongs to the metal hydrolase YfiT family. As to quaternary structure, homodimer. The cofactor is Zn(2+).

It is found in the cytoplasm. Possible metal-dependent hydrolase. In Bacillus anthracis, this protein is Putative metal-dependent hydrolase BA_2700/GBAA_2700/BAS2515.